We begin with the raw amino-acid sequence, 175 residues long: Translation initiation factor IF-3, chloroplastic (175 aa).

The protein belongs to the IF-3 family. As to quaternary structure, monomer.

It is found in the plastid. Its subcellular location is the chloroplast. Functionally, IF-3 binds to the 30S ribosomal subunit and shifts the equilibrium between 70S ribosomes and their 50S and 30S subunits in favor of the free subunits, thus enhancing the availability of 30S subunits on which protein synthesis initiation begins. In Cyanidioschyzon merolae (strain NIES-3377 / 10D) (Unicellular red alga), this protein is Translation initiation factor IF-3, chloroplastic.